The primary structure comprises 198 residues: ATP-dependent Clp protease proteolytic subunit (198 aa).

Ser102 (nucleophile) is an active-site residue. His127 is an active-site residue.

This sequence belongs to the peptidase S14 family. Fourteen ClpP subunits assemble into 2 heptameric rings which stack back to back to give a disk-like structure with a central cavity, resembling the structure of eukaryotic proteasomes.

Its subcellular location is the cytoplasm. It carries out the reaction Hydrolysis of proteins to small peptides in the presence of ATP and magnesium. alpha-casein is the usual test substrate. In the absence of ATP, only oligopeptides shorter than five residues are hydrolyzed (such as succinyl-Leu-Tyr-|-NHMec, and Leu-Tyr-Leu-|-Tyr-Trp, in which cleavage of the -Tyr-|-Leu- and -Tyr-|-Trp bonds also occurs).. Functionally, cleaves peptides in various proteins in a process that requires ATP hydrolysis. Has a chymotrypsin-like activity. Plays a major role in the degradation of misfolded proteins. The protein is ATP-dependent Clp protease proteolytic subunit of Brachyspira hyodysenteriae (strain ATCC 49526 / WA1).